The primary structure comprises 742 residues: Ion-translocating oxidoreductase complex subunit C (742 aa).

4Fe-4S ferredoxin-type domains follow at residues 369 to 397 (GEPQ…QQLY) and 407 to 436 (KATT…VQYF). The [4Fe-4S] cluster site is built by Cys-377, Cys-380, Cys-383, Cys-387, Cys-416, Cys-419, Cys-422, and Cys-426. The segment at 602–719 (KLEQQQANAE…PEEQVDPRKA (118 aa)) is disordered.

Belongs to the 4Fe4S bacterial-type ferredoxin family. RnfC subfamily. The complex is composed of six subunits: RsxA, RsxB, RsxC, RsxD, RsxE and RsxG. The cofactor is [4Fe-4S] cluster.

It is found in the cell inner membrane. Part of a membrane-bound complex that couples electron transfer with translocation of ions across the membrane. Required to maintain the reduced state of SoxR. The chain is Ion-translocating oxidoreductase complex subunit C from Escherichia coli O6:H1 (strain CFT073 / ATCC 700928 / UPEC).